The sequence spans 723 residues: Fatty acid oxidation complex subunit alpha (723 aa).

Positions 1-189 (MIYQADTLQV…KIGLLDAVVE (189 aa)) are enoyl-CoA hydratase/isomerase. Residue aspartate 296 participates in substrate binding. Residues 311-723 (SKDTERAAVL…FYGAQQQGSI (413 aa)) form a 3-hydroxyacyl-CoA dehydrogenase region. NAD(+) is bound by residues methionine 325, aspartate 344, 401 to 403 (VVE), lysine 408, and serine 430. Histidine 451 acts as the For 3-hydroxyacyl-CoA dehydrogenase activity in catalysis. Asparagine 454 provides a ligand contact to NAD(+). Substrate is bound by residues asparagine 501 and tyrosine 661.

This sequence in the N-terminal section; belongs to the enoyl-CoA hydratase/isomerase family. It in the C-terminal section; belongs to the 3-hydroxyacyl-CoA dehydrogenase family. In terms of assembly, heterotetramer of two alpha chains (FadB) and two beta chains (FadA).

The catalysed reaction is a (3S)-3-hydroxyacyl-CoA + NAD(+) = a 3-oxoacyl-CoA + NADH + H(+). It carries out the reaction a (3S)-3-hydroxyacyl-CoA = a (2E)-enoyl-CoA + H2O. It catalyses the reaction a 4-saturated-(3S)-3-hydroxyacyl-CoA = a (3E)-enoyl-CoA + H2O. The enzyme catalyses (3S)-3-hydroxybutanoyl-CoA = (3R)-3-hydroxybutanoyl-CoA. The catalysed reaction is a (3Z)-enoyl-CoA = a 4-saturated (2E)-enoyl-CoA. It carries out the reaction a (3E)-enoyl-CoA = a 4-saturated (2E)-enoyl-CoA. The protein operates within lipid metabolism; fatty acid beta-oxidation. Its function is as follows. Involved in the aerobic and anaerobic degradation of long-chain fatty acids via beta-oxidation cycle. Catalyzes the formation of 3-oxoacyl-CoA from enoyl-CoA via L-3-hydroxyacyl-CoA. It can also use D-3-hydroxyacyl-CoA and cis-3-enoyl-CoA as substrate. The polypeptide is Fatty acid oxidation complex subunit alpha (Vibrio parahaemolyticus serotype O3:K6 (strain RIMD 2210633)).